An 83-amino-acid polypeptide reads, in one-letter code: Small ribosomal subunit protein bS16 (83 aa).

This sequence belongs to the bacterial ribosomal protein bS16 family.

In Acidovorax ebreus (strain TPSY) (Diaphorobacter sp. (strain TPSY)), this protein is Small ribosomal subunit protein bS16.